The sequence spans 1086 residues: Lon protease homolog, mitochondrial (1086 aa).

Residues 1–55 (MLRTSCTSSLRRVVGKYVVSPLVASQIRFATSSVRSQPYLLNSELTELPAQFKRY) constitute a mitochondrion transit peptide. Residues 61 to 176 (TEKPEGDVPE…EPNEIVTNAG (116 aa)) form a disordered region. Residues 69-83 (PESGPEPSGESGISE) show a composition bias toward low complexity. Residues 85 to 120 (SNVENDKHDGNDEIKPEAEKNEKDEIEKPEIDKDAI) are compositionally biased toward basic and acidic residues. A compositionally biased stretch (low complexity) spans 124–163 (DGVSESSVENVSGSSSAAGGASAPPSGNSNNNNNNNNNNN). Positions 183–406 (LLAIPMKDRP…KALELLKVEL (224 aa)) constitute a Lon N-terminal domain. ATP is bound at residue 558-565 (GPPGTGKT). 2 stretches are compositionally biased toward basic and acidic residues: residues 767-782 (EARE…EAKS) and 815-827 (KVDE…SEEL). Disordered stretches follow at residues 767–788 (EARE…ITGS) and 800–835 (KAQS…EEEE). One can recognise a Lon proteolytic domain in the interval 871–1059 (IPPPGVATGL…QDVFDEIFPN (189 aa)). Catalysis depends on residues Ser965 and Lys1008.

This sequence belongs to the peptidase S16 family. As to quaternary structure, homohexamer or homoheptamer. Organized in a ring with a central cavity.

It is found in the mitochondrion matrix. It catalyses the reaction Hydrolysis of proteins in presence of ATP.. ATP-dependent serine protease that mediates the selective degradation of misfolded, unassembled or oxidatively damaged polypeptides as well as certain short-lived regulatory proteins in the mitochondrial matrix. May also have a chaperone function in the assembly of inner membrane protein complexes. Participates in the regulation of mitochondrial gene expression and in the maintenance of the integrity of the mitochondrial genome. Binds to mitochondrial DNA in a site-specific manner. The protein is Lon protease homolog, mitochondrial of Scheffersomyces stipitis (strain ATCC 58785 / CBS 6054 / NBRC 10063 / NRRL Y-11545) (Yeast).